Here is a 166-residue protein sequence, read N- to C-terminus: Large ribosomal subunit protein uL10 (166 aa).

The protein belongs to the universal ribosomal protein uL10 family. Part of the ribosomal stalk of the 50S ribosomal subunit. The N-terminus interacts with L11 and the large rRNA to form the base of the stalk. The C-terminus forms an elongated spine to which L12 dimers bind in a sequential fashion forming a multimeric L10(L12)X complex.

In terms of biological role, forms part of the ribosomal stalk, playing a central role in the interaction of the ribosome with GTP-bound translation factors. The polypeptide is Large ribosomal subunit protein uL10 (Streptococcus uberis (strain ATCC BAA-854 / 0140J)).